The sequence spans 564 residues: Apyrase (564 aa).

Residues 1-25 form the signal peptide; that stretch reads MAGKPGIQLFVIFLLLSSFAAVVWA. Asp48, His50, Asp99, Asn131, His234, and His258 together coordinate a divalent metal cation. Arg371 is a binding site for AMP. Asn391 carries N-linked (GlcNAc...) asparagine glycosylation. Residues Arg406, Phe425, and Asp515 each contribute to the AMP site.

The protein belongs to the 5'-nucleotidase family. Requires a divalent metal cation as cofactor. Female salivary gland (at protein level). Low-level expression in male tissues. Not detected in female carcasses without salivary glands.

It localises to the secreted. It carries out the reaction a ribonucleoside 5'-triphosphate + 2 H2O = a ribonucleoside 5'-phosphate + 2 phosphate + 2 H(+). Facilitates hematophagy by inhibiting ADP-dependent platelet aggregation in the host. Cleaves adenosine triphosphate (ATP) and adenosine diphosphate (ADP) to adenosine monophosphate (AMP) and inorganic phosphate. May reduce probing time by facilitating the speed of locating blood. The protein is Apyrase of Aedes albopictus (Asian tiger mosquito).